The sequence spans 220 residues: Probable GTP-binding protein EngB (220 aa).

The EngB-type G domain occupies Glu26 to Pro200. GTP contacts are provided by residues Gly34 to Ser41, Gly61 to Leu65, Asp79 to Gly82, Thr146 to Asp149, and Phe179 to Ser181. The Mg(2+) site is built by Ser41 and Thr63.

It belongs to the TRAFAC class TrmE-Era-EngA-EngB-Septin-like GTPase superfamily. EngB GTPase family. It depends on Mg(2+) as a cofactor.

Its function is as follows. Necessary for normal cell division and for the maintenance of normal septation. This chain is Probable GTP-binding protein EngB, found in Vibrio cholerae serotype O1 (strain ATCC 39541 / Classical Ogawa 395 / O395).